The chain runs to 417 residues: Tyrosine--tRNA ligase (417 aa).

Y39 contacts L-tyrosine. The 'HIGH' region signature appears at 44–53; that stretch reads ATATSLHIGN. L-tyrosine is bound by residues Y176 and Q180. Positions 236–240 match the 'KMSKS' region motif; sequence KMGKS. K239 contacts ATP. The 67-residue stretch at 350–416 folds into the S4 RNA-binding domain; the sequence is IGILSLLVTA…GKKKHVLVRP (67 aa).

Belongs to the class-I aminoacyl-tRNA synthetase family. TyrS type 1 subfamily. Homodimer.

Its subcellular location is the cytoplasm. The catalysed reaction is tRNA(Tyr) + L-tyrosine + ATP = L-tyrosyl-tRNA(Tyr) + AMP + diphosphate + H(+). Its function is as follows. Catalyzes the attachment of tyrosine to tRNA(Tyr) in a two-step reaction: tyrosine is first activated by ATP to form Tyr-AMP and then transferred to the acceptor end of tRNA(Tyr). The chain is Tyrosine--tRNA ligase from Mesorhizobium japonicum (strain LMG 29417 / CECT 9101 / MAFF 303099) (Mesorhizobium loti (strain MAFF 303099)).